We begin with the raw amino-acid sequence, 225 residues long: Small ribosomal subunit protein L51-b (225 aa).

Residues 1–84 constitute a mitochondrion transit peptide; sequence MKFPDLLRCS…QCAFISSDRF (84 aa).

The protein belongs to the bacterial ribosomal protein bS1 family. Component of the mitochondrial small ribosomal subunit (mt-SSU). Mature yeast 74S mitochondrial ribosomes consist of a small (37S) and a large (54S) subunit. The 37S small subunit contains a 15S ribosomal RNA (15S mt-rRNA) and at least 32 different proteins. The 54S large subunit contains a 21S rRNA (21S mt-rRNA) and at least 45 different proteins. This subunit is mutually exclusive with mrp51/small ribosomal subunit protein bS1m.

Its subcellular location is the mitochondrion. In terms of biological role, component of the mitochondrial ribosome (mitoribosome), a dedicated translation machinery responsible for the synthesis of mitochondrial genome-encoded proteins, including at least some of the essential transmembrane subunits of the mitochondrial respiratory chain. The mitoribosomes are attached to the mitochondrial inner membrane and translation products are cotranslationally integrated into the membrane. Functionally interacts with the 5'-UTR of mitochondrial mRNAs. Specifically plays a role in the translation of cob1/cytochrome b and cox3. Has a role in meiosis. This is Small ribosomal subunit protein L51-b from Schizosaccharomyces pombe (strain 972 / ATCC 24843) (Fission yeast).